We begin with the raw amino-acid sequence, 459 residues long: WPP domain-interacting protein 3 (459 aa).

Residues 1 to 17 (MNESVPDSVEDNGNSVP) are compositionally biased toward polar residues. The segment at 1-78 (MNESVPDSVE…GPVRDEAAPV (78 aa)) is disordered. Over residues 52–66 (STRKGFGLKKWRRIK) the composition is skewed to basic residues. 2 short sequence motifs (nuclear localization signal) span residues 60 to 61 (KK) and 63 to 64 (RR). Basic and acidic residues predominate over residues 67–78 (RDGPVRDEAAPV). Residues 86 to 87 (KR) carry the Nuclear localization signal 3 motif. Disordered regions lie at residues 240 to 266 (KEEV…NNNH) and 308 to 330 (TDEL…TSSG). Residues 251–266 (NGNKEDDGESKKNNNH) are compositionally biased toward basic and acidic residues. The segment covering 308–319 (TDELSSDQPSHQ) has biased composition (polar residues). Residues 331–375 (SKALILKEKVKLLEHKLEEARAALEAKEARIQELENSKIESELEC) are a coiled coil. The 34-residue stretch at 426–459 (KLGFYILTQLILLVSILRFLVLQFSPASRLVIPT) folds into the KASH domain. Residues 427–447 (LGFYILTQLILLVSILRFLVL) traverse the membrane as a helical segment.

In terms of assembly, component of Ran complexes at least composed of WIT1 or WIT2, RANGAP1 or RANGAP2, and WIP1 or WIP2 or WIP3. Interacts with RANGAP1, WPP1/MAF1, and WPP2/MAF2. Interacts with SUN1 and SUN2. Core component of the LINC complex which is composed of inner nuclear membrane SUN domain-containing proteins coupled to outer nuclear membrane WIP and WIT proteins. The LINC complex also involves nucleoskeletal proteins CRWN/LINC and possibly KAKU4 and the cytoskeletal myosin KAKU1. Interacts with WIT2. Expressed in seedlings, roots, stems, leaves, and flowers.

It localises to the nucleus envelope. The protein resides in the nucleus membrane. Functionally, mediates and enhances the nuclear envelope docking of RANGAP proteins mediated by WIT1 and WIT2 in the undifferentiated cells of root tips. As component of the SUN-WIP-WIT2-KAKU1 complex, mediates the transfer of cytoplasmic forces to the nuclear envelope (NE), leading to nuclear shape changes. This is WPP domain-interacting protein 3 (WIP3) from Arabidopsis thaliana (Mouse-ear cress).